The following is a 155-amino-acid chain: Large ribosomal subunit protein uL22 (155 aa).

The protein belongs to the universal ribosomal protein uL22 family. In terms of assembly, part of the 50S ribosomal subunit.

This protein binds specifically to 23S rRNA. It makes multiple contacts with different domains of the 23S rRNA in the assembled 50S subunit and ribosome. Functionally, the globular domain of the protein is located near the polypeptide exit tunnel on the outside of the subunit, while an extended beta-hairpin is found that lines the wall of the exit tunnel in the center of the 70S ribosome. This chain is Large ribosomal subunit protein uL22, found in Pyrococcus horikoshii (strain ATCC 700860 / DSM 12428 / JCM 9974 / NBRC 100139 / OT-3).